The primary structure comprises 1058 residues: Bromodomain-containing protein 1 (1058 aa).

The span at 1 to 12 (MRRKGRCHRGSA) shows a compositional bias: basic residues. The interval 1–26 (MRRKGRCHRGSAARHPSSPCSVKHSP) is disordered. Positions 31-80 (LTYAQAQRMVEIEIEGRLHRISIFDPLEIILEDDLTAQEMSECNSNKENS) are interaction with KAT7/HBO1 and histones. The interval 92-116 (HKNNRVKKKNEALPSAHGTPASASA) is disordered. Residue Ser128 is modified to Phosphoserine. A PHD-type 1 zinc finger spans residues 214–264 (DAVCCICMDGECQNSNVILFCDMCNLAVHQECYGVPYIPEGQWLCRHCLQS). A C2HC pre-PHD-type zinc finger spans residues 268–301 (PADCVLCPNKGGAFKKTDDDRWGHVVCALWIPEV). A PHD-type 2 zinc finger spans residues 325 to 389 (LTCYLCKQKG…RKTAYCDVHT (65 aa)). N6-acetyllysine occurs at positions 368, 516, and 519. Glycyl lysine isopeptide (Lys-Gly) (interchain with G-Cter in SUMO2) cross-links involve residues Lys554 and Lys594. A Bromo domain is found at 562 to 666 (LRLTPLTVLL…DQGGVVLRQA (105 aa)). Disordered regions lie at residues 755-776 (LSQQ…EEDG) and 791-868 (LETL…DSSF). Ser803 is modified (phosphoserine). Residues 852 to 867 (SESSISSSNSPLCDSS) are compositionally biased toward low complexity. Lys903 carries the post-translational modification N6-acetyllysine. Phosphoserine is present on Arg906. Residues 929 to 1012 (PLKVVWAKCS…KSKMVPLGID (84 aa)) form the PWWP domain. Ser1052 and Ser1055 each carry phosphoserine.

Component of some HBO1 complex composed of KAT7/HBO1, MEAF6, ING4 and BRD1/BRPF2. Component of the MOZ/MORF complex composed at least of ING5, KAT6A, KAT6B, MEAF6 and one of BRPF1, BRD1/BRPF2 and BRPF3. Interacts (via PHD-type zinc finger domain) with unmodified histone H3. Interacts (via PWWP domain) with dimethylated and trimethylated 'Lys-79' on histone H3. As to expression, highly expressed in testis.

The protein localises to the nucleus. It is found in the chromosome. Its function is as follows. Scaffold subunit of various histone acetyltransferase (HAT) complexes, such as the MOZ/MORF and HBO1 complexes, that acts as a regulator of hematopoiesis. Plays a key role in HBO1 complex by directing KAT7/HBO1 specificity towards histone H3 'Lys-14' acetylation (H3K14ac), thereby promoting erythroid differentiation. In Homo sapiens (Human), this protein is Bromodomain-containing protein 1.